A 206-amino-acid chain; its full sequence is MAANKSKGQSSLALHKVIMVGSGGVGKSALTLQFMYDEFVEDYEPTKADSYRKKVVLDGEEVQIDILDTAGQEDYAAIRDNYFRSGEGFLLVFSITEHESFTATAEFREQILRVKAEEDKIPLLVVGNKSDLEERRQVPVEEARSKAEEWGVQYVETSAKTRANVDKVFFDLMREIRTKKMSENKDKNGKKSGKNKKSFKERCCLL.

GTP is bound at residue 21–29 (GSGGVGKSA). The short motif at 43–51 (YEPTKADSY) is the Effector region element. Residues 68–72 (DTAGQ), 128–131 (NKSD), and 158–160 (SAK) each bind GTP. Positions 180–189 (KMSENKDKNG) are enriched in basic and acidic residues. The interval 180–206 (KMSENKDKNGKKSGKNKKSFKERCCLL) is disordered. Cys-203 is modified (cysteine methyl ester). A lipid anchor (S-geranylgeranyl cysteine) is attached at Cys-203. The propeptide at 204-206 (CLL) is removed in mature form.

The protein belongs to the small GTPase superfamily. Ras family. In terms of assembly, interacts with EXOC2/Sec5 and EXOC8/Exo84. Interacts (via effector domain) with RALBP1. In terms of processing, prenylation is essential for membrane localization. The farnesylated form confers resistance to the proapoptotic and anti-anchorage-dependent growth effects of some geranylgeranyltransferase I inhibitors.

The protein localises to the cell membrane. It is found in the midbody. The enzyme catalyses GTP + H2O = GDP + phosphate + H(+). Its activity is regulated as follows. Alternates between an inactive form bound to GDP and an active form bound to GTP. Activated by a guanine nucleotide-exchange factor (GEF) and inactivated by a GTPase-activating protein (GAP). Functionally, multifunctional GTPase involved in a variety of cellular processes including gene expression, cell migration, cell proliferation, oncogenic transformation and membrane trafficking. Accomplishes its multiple functions by interacting with distinct downstream effectors. Acts as a GTP sensor for GTP-dependent exocytosis of dense core vesicles. Required both to stabilize the assembly of the exocyst complex and to localize functional exocyst complexes to the leading edge of migrating cells. Required for suppression of apoptosis. In late stages of cytokinesis, upon completion of the bridge formation between dividing cells, mediates exocyst recruitment to the midbody to drive abscission. Involved in ligand-dependent receptor mediated endocytosis of the EGF and insulin receptors. This Macaca fascicularis (Crab-eating macaque) protein is Ras-related protein Ral-B (RALB).